A 57-amino-acid chain; its full sequence is Large ribosomal subunit protein bL32 (57 aa).

The span at 1-20 shows a compositional bias: basic residues; the sequence is MAVPKKKTSKGKRNQRHAVW. Residues 1–23 are disordered; it reads MAVPKKKTSKGKRNQRHAVWKAK.

This sequence belongs to the bacterial ribosomal protein bL32 family.

The chain is Large ribosomal subunit protein bL32 from Prochlorococcus marinus (strain SARG / CCMP1375 / SS120).